We begin with the raw amino-acid sequence, 25 residues long: Bifunctional chitinase/lysozyme (25 aa).

Belongs to the glycosyl hydrolase 19 family. Chitinase class I subfamily. As to quaternary structure, monomer.

The protein localises to the secreted. Its subcellular location is the extracellular space. The enzyme catalyses Random endo-hydrolysis of N-acetyl-beta-D-glucosaminide (1-&gt;4)-beta-linkages in chitin and chitodextrins.. It carries out the reaction Hydrolysis of (1-&gt;4)-beta-linkages between N-acetylmuramic acid and N-acetyl-D-glucosamine residues in a peptidoglycan and between N-acetyl-D-glucosamine residues in chitodextrins.. Functionally, bifunctional enzyme with lysozyme/chitinase activity. This is Bifunctional chitinase/lysozyme from Carica papaya (Papaya).